We begin with the raw amino-acid sequence, 278 residues long: Adenylate kinase (278 aa).

50–55 is a binding site for ATP; it reads GAGKGT. Residues 70-99 are NMP; that stretch reads ATGDMLRAQVAKGTALGKQAKKIMNEGGLV. AMP-binding positions include T71, R76, 97–99, 126–129, and Q133; these read GLV and GFPR. An LID region spans residues 167-204; that stretch reads GRLVHPASGRSYHRIFNPPKDDMKDDITGEPLVQRSDD. ATP-binding positions include R168 and 177–178; that span reads SY. The AMP site is built by R201 and R212. Residue Q240 coordinates ATP.

Belongs to the adenylate kinase family. AK2 subfamily. Monomer.

The protein resides in the cytoplasm. It localises to the cytosol. It is found in the mitochondrion intermembrane space. The catalysed reaction is AMP + ATP = 2 ADP. In terms of biological role, catalyzes the reversible transfer of the terminal phosphate group between ATP and AMP. Plays an important role in cellular energy homeostasis and in adenine nucleotide metabolism. Adenylate kinase activity is critical for regulation of the phosphate utilization and the AMP de novo biosynthesis pathways. The sequence is that of Adenylate kinase (adk-1) from Neurospora crassa (strain ATCC 24698 / 74-OR23-1A / CBS 708.71 / DSM 1257 / FGSC 987).